The chain runs to 432 residues: Enolase (432 aa).

Residue Gln163 coordinates (2R)-2-phosphoglycerate. Residue Glu205 is the Proton donor of the active site. The Mg(2+) site is built by Asp242, Glu285, and Asp312. Residues Lys337, Arg366, Ser367, and Lys388 each coordinate (2R)-2-phosphoglycerate. Lys337 acts as the Proton acceptor in catalysis.

Belongs to the enolase family. The cofactor is Mg(2+).

It is found in the cytoplasm. The protein localises to the secreted. It localises to the cell surface. The catalysed reaction is (2R)-2-phosphoglycerate = phosphoenolpyruvate + H2O. It functions in the pathway carbohydrate degradation; glycolysis; pyruvate from D-glyceraldehyde 3-phosphate: step 4/5. Functionally, catalyzes the reversible conversion of 2-phosphoglycerate (2-PG) into phosphoenolpyruvate (PEP). It is essential for the degradation of carbohydrates via glycolysis. This is Enolase from Bifidobacterium adolescentis (strain ATCC 15703 / DSM 20083 / NCTC 11814 / E194a).